We begin with the raw amino-acid sequence, 244 residues long: rRNA adenine N-6-methyltransferase (244 aa).

N11, I13, G38, E59, D84, and N101 together coordinate S-adenosyl-L-methionine.

The protein belongs to the class I-like SAM-binding methyltransferase superfamily. rRNA adenine N(6)-methyltransferase family.

The catalysed reaction is adenosine(2085) in 23S rRNA + 2 S-adenosyl-L-methionine = N(6)-dimethyladenosine(2085) in 23S rRNA + 2 S-adenosyl-L-homocysteine + 2 H(+). Functionally, this protein produces a dimethylation of the adenine residue at position 2085 in 23S rRNA, resulting in reduced affinity between ribosomes and macrolide-lincosamide-streptogramin B antibiotics. The polypeptide is rRNA adenine N-6-methyltransferase (ermC) (Staphylococcus aureus).